A 274-amino-acid polypeptide reads, in one-letter code: Secreted RxLR effector protein 144 (274 aa).

A signal peptide spans 1–20; it reads MRPWLLLLVGLSSFFALSTS. The short motif at 49-72 is the RxLR-dEER element; that stretch reads RKLRAFGGDTNTLKDSGKARREEK.

The protein belongs to the RxLR effector family.

It localises to the secreted. Its subcellular location is the host nucleus. It is found in the host cytoplasm. In terms of biological role, secreted effector that completely suppresses the host cell death induced by cell death-inducing proteins. The polypeptide is Secreted RxLR effector protein 144 (Plasmopara viticola (Downy mildew of grapevine)).